Here is a 154-residue protein sequence, read N- to C-terminus: Putative F-box protein At2g11200 (154 aa).

An F-box domain is found at 5–51; it reads TTAMSDLPRDLEEEVLSRVQLASLRAVRTTCKKWNRRLSKYRFTKKY.

This is Putative F-box protein At2g11200 from Arabidopsis thaliana (Mouse-ear cress).